A 535-amino-acid polypeptide reads, in one-letter code: CTP synthase (535 aa).

Residues 1 to 267 (MTKYIFVTGG…DQIVCDHLKL (267 aa)) form an amidoligase domain region. CTP is bound at residue serine 13. Serine 13 provides a ligand contact to UTP. Position 14-19 (14-19 (SLGKGI)) interacts with ATP. Tyrosine 54 contacts L-glutamine. An ATP-binding site is contributed by aspartate 71. Mg(2+)-binding residues include aspartate 71 and glutamate 141. CTP is bound by residues 148–150 (DIE), 188–193 (KTKPTQ), and lysine 224. Residues 188–193 (KTKPTQ) and lysine 224 each bind UTP. Residue 240 to 242 (RDA) coordinates ATP. Residues 292-534 (KIALVGKYVE…VRASITNKES (243 aa)) enclose the Glutamine amidotransferase type-1 domain. Residue glycine 354 participates in L-glutamine binding. Residue cysteine 381 is the Nucleophile; for glutamine hydrolysis of the active site. Residues 382–385 (LGMQ), glutamate 405, and arginine 462 contribute to the L-glutamine site. Catalysis depends on residues histidine 507 and glutamate 509.

The protein belongs to the CTP synthase family. Homotetramer.

It carries out the reaction UTP + L-glutamine + ATP + H2O = CTP + L-glutamate + ADP + phosphate + 2 H(+). The enzyme catalyses L-glutamine + H2O = L-glutamate + NH4(+). The catalysed reaction is UTP + NH4(+) + ATP = CTP + ADP + phosphate + 2 H(+). It participates in pyrimidine metabolism; CTP biosynthesis via de novo pathway; CTP from UDP: step 2/2. Its activity is regulated as follows. Allosterically activated by GTP, when glutamine is the substrate; GTP has no effect on the reaction when ammonia is the substrate. The allosteric effector GTP functions by stabilizing the protein conformation that binds the tetrahedral intermediate(s) formed during glutamine hydrolysis. Inhibited by the product CTP, via allosteric rather than competitive inhibition. Functionally, catalyzes the ATP-dependent amination of UTP to CTP with either L-glutamine or ammonia as the source of nitrogen. Regulates intracellular CTP levels through interactions with the four ribonucleotide triphosphates. The sequence is that of CTP synthase from Bacillus cereus (strain AH820).